A 493-amino-acid polypeptide reads, in one-letter code: Cytochrome P450 2E1 (493 aa).

298 to 303 (FAGTET) contacts substrate. C437 serves as a coordination point for heme.

Belongs to the cytochrome P450 family. Interacts with chaperones HSP70 and HSP90; this interaction is required for initial targeting to mitochondria. Heme is required as a cofactor.

It is found in the endoplasmic reticulum membrane. The protein localises to the microsome membrane. It localises to the mitochondrion inner membrane. The enzyme catalyses an organic molecule + reduced [NADPH--hemoprotein reductase] + O2 = an alcohol + oxidized [NADPH--hemoprotein reductase] + H2O + H(+). It carries out the reaction (5Z,8Z,11Z)-eicosatrienoate + reduced [NADPH--hemoprotein reductase] + O2 = 19-hydroxy-(5Z,8Z,11Z)-eicosatrienoate + oxidized [NADPH--hemoprotein reductase] + H2O + H(+). The catalysed reaction is (5Z,8Z,11Z,14Z,17Z)-eicosapentaenoate + reduced [NADPH--hemoprotein reductase] + O2 = 19-hydroxy-(5Z,8Z,11Z,14Z,17Z)-eicosapentaenoate + oxidized [NADPH--hemoprotein reductase] + H2O + H(+). It catalyses the reaction (4Z,7Z,10Z,13Z,16Z,19Z)-docosahexaenoate + reduced [NADPH--hemoprotein reductase] + O2 = 21-hydroxy-(4Z,7Z,10Z,13Z,16Z,19Z)-docosahexaenoate + oxidized [NADPH--hemoprotein reductase] + H2O + H(+). The enzyme catalyses dodecanoate + reduced [NADPH--hemoprotein reductase] + O2 = 11-hydroxydodecanoate + oxidized [NADPH--hemoprotein reductase] + H2O + H(+). It carries out the reaction tetradecanoate + reduced [NADPH--hemoprotein reductase] + O2 = 13-hydroxytetradecanoate + oxidized [NADPH--hemoprotein reductase] + H2O + H(+). The catalysed reaction is 4-nitrophenol + NADPH + O2 + H(+) = 4-nitrocatechol + NADP(+) + H2O. It participates in lipid metabolism; fatty acid metabolism. Its activity is regulated as follows. The omega-1 hydroxylase activity is stimulated by cytochrome b5. Functionally, a cytochrome P450 monooxygenase involved in the metabolism of fatty acids. Mechanistically, uses molecular oxygen inserting one oxygen atom into a substrate, and reducing the second into a water molecule, with two electrons provided by NADPH via cytochrome P450 reductase (NADPH--hemoprotein reductase). Catalyzes the hydroxylation of carbon-hydrogen bonds. Hydroxylates fatty acids specifically at the omega-1 position displaying the highest catalytic activity for saturated fatty acids. May be involved in the oxidative metabolism of xenobiotics. In Homo sapiens (Human), this protein is Cytochrome P450 2E1.